The following is a 417-amino-acid chain: RH-like protein IA (417 aa).

Transmembrane regions (helical) follow at residues 12 to 32 (CLPLCALTLEAALILLFYFFT), 44 to 64 (LVASYQVGQDLTVMAAIGFGF), 77 to 97 (VAFSLFMLALGVQWAILLDGF), 125 to 145 (ISVDAVLGKVNLVQLVVMVLV), 172 to 192 (IYVFAAYFGLSVAWCLPKPLP), 203 to 223 (TIPSLSAMLGALFLWMFWPSF), 238 to 258 (VFNTYYAVAVSVVTAISGSSL), 265 to 285 (ISMSYMHNAVLAGGVAVGTSC), 287 to 307 (LITSPWLAMVLGLVAGLISIG), 331 to 351 (NFSLLGLLGEIIYIVLLVHHT), and 358 to 378 (MIGFQVLLRIGEFSLATTIAL).

It belongs to the ammonium transporter (TC 2.A.49) family. Rh subfamily.

Its subcellular location is the membrane. May be part of an oligomeric complex which is likely to have a transport or channel function in the erythrocyte membrane. This Pan troglodytes (Chimpanzee) protein is RH-like protein IA.